Here is a 238-residue protein sequence, read N- to C-terminus: Ditrans,polycis-undecaprenyl-diphosphate synthase ((2E,6E)-farnesyl-diphosphate specific) (238 aa).

Asp14 is a catalytic residue. Asp14 lines the Mg(2+) pocket. Residues 15–18 (GNGR), Trp19, Arg27, His31, and 59–61 (SSE) contribute to the substrate site. Asn62 (proton acceptor) is an active-site residue. Residues Trp63, Arg65, Arg182, and 188-190 (RIS) contribute to the substrate site. Glu201 contributes to the Mg(2+) binding site.

It belongs to the UPP synthase family. In terms of assembly, homodimer. It depends on Mg(2+) as a cofactor.

The catalysed reaction is 8 isopentenyl diphosphate + (2E,6E)-farnesyl diphosphate = di-trans,octa-cis-undecaprenyl diphosphate + 8 diphosphate. Catalyzes the sequential condensation of isopentenyl diphosphate (IPP) with (2E,6E)-farnesyl diphosphate (E,E-FPP) to yield (2Z,6Z,10Z,14Z,18Z,22Z,26Z,30Z,34E,38E)-undecaprenyl diphosphate (di-trans,octa-cis-UPP). UPP is the precursor of glycosyl carrier lipid in the biosynthesis of bacterial cell wall polysaccharide components such as peptidoglycan and lipopolysaccharide. The polypeptide is Ditrans,polycis-undecaprenyl-diphosphate synthase ((2E,6E)-farnesyl-diphosphate specific) (Legionella pneumophila (strain Paris)).